A 216-amino-acid chain; its full sequence is Large ribosomal subunit protein uL3 (216 aa).

The segment at 137-157 is disordered; sequence GASHGAHKNHRKPGSIGGAST.

The protein belongs to the universal ribosomal protein uL3 family. As to quaternary structure, part of the 50S ribosomal subunit. Forms a cluster with proteins L14 and L19.

One of the primary rRNA binding proteins, it binds directly near the 3'-end of the 23S rRNA, where it nucleates assembly of the 50S subunit. In Paenarthrobacter aurescens (strain TC1), this protein is Large ribosomal subunit protein uL3.